The chain runs to 103 residues: UPF0058 protein MJ1205 (103 aa).

The protein belongs to the UPF0058 family.

The chain is UPF0058 protein MJ1205 from Methanocaldococcus jannaschii (strain ATCC 43067 / DSM 2661 / JAL-1 / JCM 10045 / NBRC 100440) (Methanococcus jannaschii).